The following is a 450-amino-acid chain: Tripartite motif-containing protein 64C (450 aa).

Residues 15 to 56 (CCICVNYFIDPVTTDCVHSFCRPCLCLCSEEGRAPMRCPLCR) form an RING-type zinc finger. The B box-type zinc finger occupies 87–128 (SSDNICVLHEETKELFCEADKRLLCGPCSESPEHMAHSHSPI). The Zn(2+) site is built by Cys-92, His-95, Cys-114, and His-120. A coiled-coil region spans residues 191 to 218 (DEEEQRHLQALEREAKELFQQLQDSQVR). A B30.2/SPRY domain is found at 269-450 (ELTSWCITGV…LRPFFCFGCT (182 aa)).

Belongs to the TRIM/RBCC family.

The protein is Tripartite motif-containing protein 64C (TRIM64C) of Homo sapiens (Human).